The chain runs to 198 residues: Large ribosomal subunit protein eL19 (198 aa).

Disordered regions lie at residues 66-85 (YEEA…RGTA) and 150-177 (KRAK…EERQ). A compositionally biased stretch (basic residues) spans 71-83 (RKGRHTGYGKRRG). A compositionally biased stretch (basic and acidic residues) spans 160–177 (QARRDKNKESRKRREERQ).

The protein belongs to the eukaryotic ribosomal protein eL19 family.

The chain is Large ribosomal subunit protein eL19 (rpl-19) from Caenorhabditis elegans.